Consider the following 273-residue polypeptide: NLP effector protein 10 (273 aa).

The first 21 residues, methionine 1–alanine 21, serve as a signal peptide directing secretion. The N-linked (GlcNAc...) asparagine glycan is linked to asparagine 91. The Conserved undecapeptide motif motif lies at alanine 129 to alanine 139. The Conserved heptapeptide motif signature appears at glycine 149–leucine 155.

The protein belongs to the Necrosis inducing protein (NPP1) family.

Its subcellular location is the secreted. Its function is as follows. Secreted effector that acts as a pathogen-associated molecular pattern (PAMP) recognized by the plant immune system. Seems not to induce necrosis in Nicotiana benthamiana leaves but significantly improves disease resistance of Arabidopsis thaliana to Hyaloperonospora arabidopsidis and causes an inhibition of plant growth which is typically associated with enhanced immunity when over-expressed in Arabidopsis. In Plasmopara viticola (Downy mildew of grapevine), this protein is NLP effector protein 10.